The sequence spans 99 residues: NADH-quinone oxidoreductase subunit K (99 aa).

3 helical membrane passes run 3 to 23, 28 to 48, and 59 to 79; these read PINY…GVLL, IVMF…FVTF, and MIAF…LAII.

Belongs to the complex I subunit 4L family. NDH-1 is composed of 14 different subunits. Subunits NuoA, H, J, K, L, M, N constitute the membrane sector of the complex.

It localises to the cell membrane. It carries out the reaction a quinone + NADH + 5 H(+)(in) = a quinol + NAD(+) + 4 H(+)(out). In terms of biological role, NDH-1 shuttles electrons from NADH, via FMN and iron-sulfur (Fe-S) centers, to quinones in the respiratory chain. The immediate electron acceptor for the enzyme in this species is believed to be a menaquinone. Couples the redox reaction to proton translocation (for every two electrons transferred, four hydrogen ions are translocated across the cytoplasmic membrane), and thus conserves the redox energy in a proton gradient. This Mycobacterium avium (strain 104) protein is NADH-quinone oxidoreductase subunit K.